The chain runs to 89 residues: Small ribosomal subunit protein uS15 (89 aa).

A disordered region spans residues 1 to 23 (MALTKERTASVVQQYGSGEKDTG).

It belongs to the universal ribosomal protein uS15 family. In terms of assembly, part of the 30S ribosomal subunit. Forms a bridge to the 50S subunit in the 70S ribosome, contacting the 23S rRNA.

In terms of biological role, one of the primary rRNA binding proteins, it binds directly to 16S rRNA where it helps nucleate assembly of the platform of the 30S subunit by binding and bridging several RNA helices of the 16S rRNA. Forms an intersubunit bridge (bridge B4) with the 23S rRNA of the 50S subunit in the ribosome. This chain is Small ribosomal subunit protein uS15, found in Treponema pallidum (strain Nichols).